Consider the following 442-residue polypeptide: MPKEKTHINIVVIGHVDSGKSTTTGHLIYKCGGIDQRTIEKFEKESAEMGKGSFKYAWVLDNLKAERERGITIDISLWKFETSKYYFTIIDAPGHRDFIKNMITGTSQADVAILIVAAGTGEFEAGISKNGQTREHILLSYTLGVKQMIVGVNKMDAIQYKQERYEEIKKEISAFLKKTGYNPDKIPFVPISGFQGDNMIEPSTNMPWYKGPTLIGALDSVTPPERPVDKPLRLPLQDVYKISGIGTVPVGRVETGILKPGTIVQFAPSGVSSECKSIEMHHTALAQAIPGDNVGFNVRNLTVKDIKRGNVASDAKNQPAVGCEDFTAQVIVMNHPGQIRKGYTPVLDCHTSHIACKFEELLSKIDRRTGKSMEGGEPEYIKNGDSALVKIVPTKPLCVEEFAKFPPLGRFAVRDMKQTVAVGVVKAVTPRAANASAAGKKK.

The tr-type G domain occupies 5–228 (KTHINIVVIG…DSVTPPERPV (224 aa)). The segment at 14–21 (GHVDSGKS) is G1. Residue 14 to 21 (GHVDSGKS) participates in GTP binding. The G2 stretch occupies residues 70–74 (GITID). The tract at residues 91–94 (DAPG) is G3. Residues 91–95 (DAPGH) and 153–156 (NKMD) contribute to the GTP site. The interval 153–156 (NKMD) is G4. Residues 192–194 (SGF) form a G5 region.

It belongs to the TRAFAC class translation factor GTPase superfamily. Classic translation factor GTPase family. EF-Tu/EF-1A subfamily.

It localises to the cytoplasm. This protein promotes the GTP-dependent binding of aminoacyl-tRNA to the A-site of ribosomes during protein biosynthesis. In Entamoeba histolytica (strain ATCC 30459 / HM-1:IMSS / ABRM), this protein is Elongation factor 1-alpha.